We begin with the raw amino-acid sequence, 210 residues long: MARTPSSDRPERGRGGERGDRPNRGRGGAEQTPREREESEFVDKLVHINRVAKVVKGGRRFAFAALVVVGDAKGRVGCGSGKAREVPEAIRKATEQAKRNMIKIALREGRTLHHDAYGHFGAGRVILRAAPAGTGIIAGGPMRAVFETMGVQDVVAKCLGTSNPHNMIKATFDALINLASPRHVAAKRGKKVGEIIGRRDGAAAAAAAGV.

Over residues 1-23 the composition is skewed to basic and acidic residues; the sequence is MARTPSSDRPERGRGGERGDRPN. The tract at residues 1-40 is disordered; sequence MARTPSSDRPERGRGGERGDRPNRGRGGAEQTPREREESE. The S5 DRBM domain occupies 41–104; that stretch reads FVDKLVHINR…EQAKRNMIKI (64 aa).

The protein belongs to the universal ribosomal protein uS5 family. As to quaternary structure, part of the 30S ribosomal subunit. Contacts proteins S4 and S8.

In terms of biological role, with S4 and S12 plays an important role in translational accuracy. Its function is as follows. Located at the back of the 30S subunit body where it stabilizes the conformation of the head with respect to the body. The polypeptide is Small ribosomal subunit protein uS5 (Paramagnetospirillum magneticum (strain ATCC 700264 / AMB-1) (Magnetospirillum magneticum)).